We begin with the raw amino-acid sequence, 448 residues long: 3-phosphoshikimate 1-carboxyvinyltransferase (448 aa).

Positions 38, 39, and 43 each coordinate 3-phosphoshikimate. K38 lines the phosphoenolpyruvate pocket. The phosphoenolpyruvate site is built by G111 and R140. 3-phosphoshikimate contacts are provided by S185, Q187, D335, and K362. Q187 provides a ligand contact to phosphoenolpyruvate. Residue D335 is the Proton acceptor of the active site. Residues R366 and R408 each contribute to the phosphoenolpyruvate site.

It belongs to the EPSP synthase family. Monomer.

It is found in the cytoplasm. The catalysed reaction is 3-phosphoshikimate + phosphoenolpyruvate = 5-O-(1-carboxyvinyl)-3-phosphoshikimate + phosphate. It functions in the pathway metabolic intermediate biosynthesis; chorismate biosynthesis; chorismate from D-erythrose 4-phosphate and phosphoenolpyruvate: step 6/7. Functionally, catalyzes the transfer of the enolpyruvyl moiety of phosphoenolpyruvate (PEP) to the 5-hydroxyl of shikimate-3-phosphate (S3P) to produce enolpyruvyl shikimate-3-phosphate and inorganic phosphate. In Gloeothece citriformis (strain PCC 7424) (Cyanothece sp. (strain PCC 7424)), this protein is 3-phosphoshikimate 1-carboxyvinyltransferase.